Here is a 656-residue protein sequence, read N- to C-terminus: NADH-ubiquinone oxidoreductase chain 5 (656 aa).

Transmembrane regions (helical) follow at residues 4 to 21 (TLII…FFGR), 28 to 50 (AHLI…FFEV), 81 to 103 (LTVS…SISY), 112 to 129 (RFFS…ILVT), 133 to 155 (YLIM…NFWF), 176 to 198 (TLLT…STVF), 208 to 230 (IITI…VGLH), 243 to 262 (VSAL…LLMR), 272 to 294 (TVLV…IGLF), 301 to 319 (VIAY…AVGL), 329 to 351 (LVNH…HAVA), 364 to 386 (EFLP…VPFM), 409 to 431 (IVYF…VLYL), 452 to 471 (LFMT…FGYL), 514 to 536 (FVFT…KLLI), 603 to 625 (SLGN…GLIF), and 629 to 651 (LLYF…FALL).

This sequence belongs to the complex I subunit 5 family.

Its subcellular location is the mitochondrion inner membrane. The enzyme catalyses a ubiquinone + NADH + 5 H(+)(in) = a ubiquinol + NAD(+) + 4 H(+)(out). Its function is as follows. Core subunit of the mitochondrial membrane respiratory chain NADH dehydrogenase (Complex I) that is believed to belong to the minimal assembly required for catalysis. Complex I functions in the transfer of electrons from NADH to the respiratory chain. The immediate electron acceptor for the enzyme is believed to be ubiquinone. The sequence is that of NADH-ubiquinone oxidoreductase chain 5 (nad5) from Aspergillus niger.